We begin with the raw amino-acid sequence, 269 residues long: Uncharacterised methyltransferase MT1546 (269 aa).

It belongs to the methyltransferase superfamily.

In Mycobacterium tuberculosis (strain CDC 1551 / Oshkosh), this protein is Uncharacterised methyltransferase MT1546.